The sequence spans 485 residues: Glutamyl-tRNA(Gln) amidotransferase subunit A (485 aa).

Active-site charge relay system residues include Lys-79 and Ser-154. The active-site Acyl-ester intermediate is Ser-178.

The protein belongs to the amidase family. GatA subfamily. In terms of assembly, heterotrimer of A, B and C subunits.

It catalyses the reaction L-glutamyl-tRNA(Gln) + L-glutamine + ATP + H2O = L-glutaminyl-tRNA(Gln) + L-glutamate + ADP + phosphate + H(+). In terms of biological role, allows the formation of correctly charged Gln-tRNA(Gln) through the transamidation of misacylated Glu-tRNA(Gln) in organisms which lack glutaminyl-tRNA synthetase. The reaction takes place in the presence of glutamine and ATP through an activated gamma-phospho-Glu-tRNA(Gln). The chain is Glutamyl-tRNA(Gln) amidotransferase subunit A from Bacillus velezensis (strain DSM 23117 / BGSC 10A6 / LMG 26770 / FZB42) (Bacillus amyloliquefaciens subsp. plantarum).